The primary structure comprises 186 residues: Elongation factor P (186 aa).

The protein belongs to the elongation factor P family.

It is found in the cytoplasm. It participates in protein biosynthesis; polypeptide chain elongation. Functionally, involved in peptide bond synthesis. Stimulates efficient translation and peptide-bond synthesis on native or reconstituted 70S ribosomes in vitro. Probably functions indirectly by altering the affinity of the ribosome for aminoacyl-tRNA, thus increasing their reactivity as acceptors for peptidyl transferase. This is Elongation factor P from Prochlorococcus marinus (strain MIT 9515).